The following is a 79-amino-acid chain: UPF0154 protein lwe1321 (79 aa).

The helical transmembrane segment at 2 to 22 threads the bilayer; sequence WIYILVGIICLLAGLAGGFFI. Positions 57 to 66 are enriched in polar residues; sequence KINQMMSAMN. The segment at 57–79 is disordered; the sequence is KINQMMSAMNKQQEKEKPKKAKK.

Belongs to the UPF0154 family.

The protein localises to the cell membrane. The polypeptide is UPF0154 protein lwe1321 (Listeria welshimeri serovar 6b (strain ATCC 35897 / DSM 20650 / CCUG 15529 / CIP 8149 / NCTC 11857 / SLCC 5334 / V8)).